We begin with the raw amino-acid sequence, 353 residues long: Protein CEPU-1 (353 aa).

Residues 1-28 form the signal peptide; sequence MAQAKMQHPVSWVIFAGMAALLLFQGVP. 3 consecutive Ig-like C2-type domains span residues 37-124, 134-216, and 220-314; these read PKAM…PKTS, PKIT…VKVT, and PPYI…ETTT. Asn42, Asn68, and Asn150 each carry an N-linked (GlcNAc...) asparagine glycan. Cysteines 55 and 113 form a disulfide. 2 disulfides stabilise this stretch: Cys155–Cys199 and Cys241–Cys293. N-linked (GlcNAc...) asparagine glycans are attached at residues Asn282, Asn290, and Asn303. Ser330 carries the GPI-anchor amidated serine lipid modification. Positions 331–353 are cleaved as a propeptide — removed in mature form; the sequence is GAWRRGSCAWLLALPLAQLARQF.

Belongs to the immunoglobulin superfamily. IgLON family. As to quaternary structure, interacts with NEGR1. As to expression, found on the dendrites, somata and axons of developing Purkinje cells. Undetectable on other neurons like Golgi or granule cells.

The protein resides in the cell membrane. Its function is as follows. It may be a cellular address molecule specific to Purkinje cells. It may represent a receptor or a subunit of a receptor complex. The sequence is that of Protein CEPU-1 from Gallus gallus (Chicken).